Here is a 175-residue protein sequence, read N- to C-terminus: Large ribosomal subunit protein uL10 (175 aa).

Belongs to the universal ribosomal protein uL10 family. Part of the ribosomal stalk of the 50S ribosomal subunit. The N-terminus interacts with L11 and the large rRNA to form the base of the stalk. The C-terminus forms an elongated spine to which L12 dimers bind in a sequential fashion forming a multimeric L10(L12)X complex.

Functionally, forms part of the ribosomal stalk, playing a central role in the interaction of the ribosome with GTP-bound translation factors. The sequence is that of Large ribosomal subunit protein uL10 from Cupriavidus taiwanensis (strain DSM 17343 / BCRC 17206 / CCUG 44338 / CIP 107171 / LMG 19424 / R1) (Ralstonia taiwanensis (strain LMG 19424)).